Here is a 185-residue protein sequence, read N- to C-terminus: Ribosome-recycling factor (185 aa).

The segment at 143-163 is disordered; that stretch reads RKDGEAGEDEVARAEKDLDKS.

Belongs to the RRF family.

It is found in the cytoplasm. Its function is as follows. Responsible for the release of ribosomes from messenger RNA at the termination of protein biosynthesis. May increase the efficiency of translation by recycling ribosomes from one round of translation to another. The polypeptide is Ribosome-recycling factor (Mycobacterium marinum (strain ATCC BAA-535 / M)).